Consider the following 358-residue polypeptide: Anhydro-N-acetylmuramic acid kinase (358 aa).

An ATP-binding site is contributed by 9-16 (GTSLDGVD).

Belongs to the anhydro-N-acetylmuramic acid kinase family.

The catalysed reaction is 1,6-anhydro-N-acetyl-beta-muramate + ATP + H2O = N-acetyl-D-muramate 6-phosphate + ADP + H(+). Its pathway is amino-sugar metabolism; 1,6-anhydro-N-acetylmuramate degradation. The protein operates within cell wall biogenesis; peptidoglycan recycling. Its function is as follows. Catalyzes the specific phosphorylation of 1,6-anhydro-N-acetylmuramic acid (anhMurNAc) with the simultaneous cleavage of the 1,6-anhydro ring, generating MurNAc-6-P. Is required for the utilization of anhMurNAc either imported from the medium or derived from its own cell wall murein, and thus plays a role in cell wall recycling. The protein is Anhydro-N-acetylmuramic acid kinase of Acidiphilium cryptum (strain JF-5).